Here is a 256-residue protein sequence, read N- to C-terminus: Trypsin alpha (256 aa).

An N-terminal signal peptide occupies residues 1 to 22 (MLKIVILLSAVVCALGGTVPEG). The propeptide at 23–30 (LLPQLDGR) is activation peptide. Positions 31 to 254 (IVGGSATTIS…LRSWVISTAN (224 aa)) constitute a Peptidase S1 domain. A disulfide bridge connects residues Cys-56 and Cys-72. Active-site charge relay system residues include His-71 and Asp-116. Cystine bridges form between Cys-180/Cys-197 and Cys-206/Cys-230. The active-site Charge relay system is the Ser-210.

It belongs to the peptidase S1 family.

Its subcellular location is the secreted. The protein localises to the extracellular space. It carries out the reaction Preferential cleavage: Arg-|-Xaa, Lys-|-Xaa.. This chain is Trypsin alpha (alphaTry), found in Drosophila erecta (Fruit fly).